A 157-amino-acid chain; its full sequence is MSTPSGSNPLPMADKLEAKGGNGGKIWDDGVHEGVSQIYIQEGSTGGIASIKFDYVKNGQPKAGSTHGNSYQNFTEWFDLNHTCDEHILSVKCYYDEGEIQGLVIKTNIRTSAYMGYNIGTTFTLEVKGKKIVGFHGSFDKNLTSLGAYFAPLSPAK.

Residues alanine 13 to proline 152 form the Jacalin-type lectin domain.

Belongs to the jacalin lectin family. In terms of tissue distribution, expressed in stems, leaves and flowers. Not detected in roots.

Confers broad resistance to potexviruses. Inhibits virus accumulation at the cellular level. In Arabidopsis thaliana (Mouse-ear cress), this protein is Jacalin-related lectin 15 (JAL15).